The sequence spans 396 residues: Protein btn1 (396 aa).

The next 8 membrane-spanning stretches (helical) occupy residues cysteine 15–leucine 35, glycine 45–leucine 65, isoleucine 76–valine 96, leucine 138–valine 158, threonine 161–proline 181, phenylalanine 234–proline 254, leucine 296–threonine 316, and phenylalanine 321–tyrosine 341.

It belongs to the battenin family.

Its subcellular location is the endoplasmic reticulum membrane. The protein resides in the vacuole membrane. Its function is as follows. Involved in vacuolar transport and vacuole pH homeostasis. Also required for cytokinesis. The chain is Protein btn1 from Schizosaccharomyces pombe (strain 972 / ATCC 24843) (Fission yeast).